The following is a 335-amino-acid chain: tRNA N6-adenosine threonylcarbamoyltransferase (335 aa).

Residues histidine 110 and histidine 114 each coordinate Fe cation. Substrate contacts are provided by residues 132–136 (LVSGG), aspartate 165, glycine 178, and asparagine 271. Aspartate 299 serves as a coordination point for Fe cation.

Belongs to the KAE1 / TsaD family. Fe(2+) serves as cofactor.

Its subcellular location is the cytoplasm. The catalysed reaction is L-threonylcarbamoyladenylate + adenosine(37) in tRNA = N(6)-L-threonylcarbamoyladenosine(37) in tRNA + AMP + H(+). In terms of biological role, required for the formation of a threonylcarbamoyl group on adenosine at position 37 (t(6)A37) in tRNAs that read codons beginning with adenine. Is involved in the transfer of the threonylcarbamoyl moiety of threonylcarbamoyl-AMP (TC-AMP) to the N6 group of A37, together with TsaE and TsaB. TsaD likely plays a direct catalytic role in this reaction. This Campylobacter jejuni subsp. jejuni serotype O:6 (strain 81116 / NCTC 11828) protein is tRNA N6-adenosine threonylcarbamoyltransferase.